The primary structure comprises 205 residues: High frequency lysogenization protein HflD homolog (205 aa).

This sequence belongs to the HflD family.

The protein resides in the cytoplasm. It localises to the cell inner membrane. This Vibrio cholerae serotype O1 (strain ATCC 39541 / Classical Ogawa 395 / O395) protein is High frequency lysogenization protein HflD homolog.